Consider the following 125-residue polypeptide: Large ribosomal subunit protein eL31 (125 aa).

Methionine 1 carries the post-translational modification N-acetylmethionine. Serine 15 is subject to Phosphoserine. Lysine 55 and lysine 70 each carry N6-succinyllysine. At lysine 75 the chain carries N6-acetyllysine; alternate. Lysine 75 carries the post-translational modification N6-succinyllysine; alternate. At serine 98 the chain carries Phosphoserine.

This sequence belongs to the eukaryotic ribosomal protein eL31 family. As to quaternary structure, component of the large ribosomal subunit.

The protein localises to the cytoplasm. Functionally, component of the large ribosomal subunit. The ribosome is a large ribonucleoprotein complex responsible for the synthesis of proteins in the cell. The polypeptide is Large ribosomal subunit protein eL31 (RPL31) (Oryctolagus cuniculus (Rabbit)).